The following is a 351-amino-acid chain: c-di-GMP synthase (351 aa).

Belongs to the CD-NTase family. E05 subfamily.

The catalysed reaction is 2 GTP = 3',3'-c-di-GMP + 2 diphosphate. Functionally, cyclic nucleotide synthase (second messenger synthase) of a CBASS antivirus system. CBASS (cyclic oligonucleotide-based antiphage signaling system) provides immunity against bacteriophage. The CD-NTase protein synthesizes cyclic nucleotides in response to infection; these serve as specific second messenger signals. The signals activate a diverse range of effectors, leading to bacterial cell death and thus abortive phage infection. A type I-D(GG) CBASS system. Its function is as follows. Cyclic dinucleotide synthase that catalyzes the synthesis of c-di-GMP, has no activity with other NTP substrates. This is c-di-GMP synthase (cdnE) from Capnocytophaga granulosa (strain ATCC 51502 / DSM 11449 / JCM 8566 / LMG 16022 / NCTC 12948 / B0611).